The primary structure comprises 439 residues: Proline--tRNA ligase (439 aa).

It belongs to the class-II aminoacyl-tRNA synthetase family. ProS type 2 subfamily. Homodimer.

The protein localises to the cytoplasm. It carries out the reaction tRNA(Pro) + L-proline + ATP = L-prolyl-tRNA(Pro) + AMP + diphosphate. Catalyzes the attachment of proline to tRNA(Pro) in a two-step reaction: proline is first activated by ATP to form Pro-AMP and then transferred to the acceptor end of tRNA(Pro). In Bradyrhizobium diazoefficiens (strain JCM 10833 / BCRC 13528 / IAM 13628 / NBRC 14792 / USDA 110), this protein is Proline--tRNA ligase.